A 296-amino-acid polypeptide reads, in one-letter code: Myeloid differentiation primary response protein MyD88 (296 aa).

The Death domain occupies 32–109 (RLSLFLNVRT…DVLLELGPSI (78 aa)). The tract at residues 110-155 (EEDCQKYILKQQQEEAEKPLQVAAVDSSVPRTAELAGITTLDDPLG) is intermediate domain. A TIR domain is found at 159–293 (ERFDAFICYC…WFWTRLAKAL (135 aa)). Residue serine 244 is modified to Phosphoserine.

As to quaternary structure, homodimer. Also forms heterodimers with TIRAP. Binds to TLR2, TLR4, TLR5, IRAK1, IRAK2 and IRAK4 via their respective TIR domains. Interacts with IL18R1. Interacts with BMX, IL1RL1, IKBKE and IRF7. Interacts with LRRFIP1 and LRRFIP2; this interaction positively regulates Toll-like receptor (TLR) signaling in response to agonist. Interacts with FLII. LRRFIP1 and LRRFIP2 compete with FLII for MYD88-binding. Interacts with IRF1. Upon IL1B treatment, forms a complex with PELI1, IRAK1, IRAK4 and TRAF6; this complex recruits MAP3K7/TAK1, TAB1 and TAB2 to mediate NF-kappa-B activation. Direct binding of SMAD6 to PELI1 prevents the complex formation and hence negatively regulates IL1R-TLR signaling and eventually NF-kappa-B-mediated gene expression. May interact with PIK3AP1. Interacts (via TIR domain) with DHX9 (via H2A and OB-fold regions); this interaction is direct. Interacts with OTUD4 deubiquitinase; the interaction is direct. In terms of processing, ubiquitinated; undergoes 'Lys-63'-linked polyubiquitination. OTUD4 specifically hydrolyzes 'Lys-63'-linked polyubiquitinated MYD88. Deubiquitinated by USP3 that cleaves 'Lys-63'-linked ubiquitin chains leading to inhibition of MYD88-induced NF-kappa-B signaling.

It localises to the cytoplasm. It is found in the nucleus. Adapter protein involved in the Toll-like receptor and IL-1 receptor signaling pathway in the innate immune response. Acts via IRAK1, IRAK2, IRF7 and TRAF6, leading to NF-kappa-B activation, cytokine secretion and the inflammatory response. Increases IL-8 transcription. Involved in IL-18-mediated signaling pathway. Activates IRF1 resulting in its rapid migration into the nucleus to mediate an efficient induction of IFN-beta, NOS2/INOS, and IL12A genes. Upon TLR8 activation by GU-rich single-stranded RNA (GU-rich RNA) derived from viruses, induces IL1B release through NLRP3 inflammasome activation. MyD88-mediated signaling in intestinal epithelial cells is crucial for maintenance of gut homeostasis and controls the expression of the antimicrobial lectin REG3G in the small intestine. The sequence is that of Myeloid differentiation primary response protein MyD88 (MYD88) from Gorilla gorilla gorilla (Western lowland gorilla).